Consider the following 51-residue polypeptide: MDNTLLSLTHEQQQQAVQQIQQLVQQGISSGEAIAIVAQQLRDTHQKSEEK.

The protein belongs to the UPF0181 family.

This chain is UPF0181 protein HAPS_0710, found in Glaesserella parasuis serovar 5 (strain SH0165) (Haemophilus parasuis).